A 511-amino-acid chain; its full sequence is Potassium voltage-gated channel subfamily A member 10 (511 aa).

The segment at 25 to 44 is disordered; it reads EPGYATDFDPTSSKGRPGSS. Residues 218 to 238 traverse the membrane as a helical segment; that stretch reads VAVVSVLVVVISITIFCLETL. The helical transmembrane segment at 271–292 threads the bilayer; it reads FFMVESTCIVWFTFELVLRFVV. Cys293 carries the S-palmitoyl cysteine lipid modification. The chain crosses the membrane as a helical span at residues 303-323; sequence IMNIIDIISIIPYFATLITEL. A helical; Voltage-sensor transmembrane segment spans residues 339 to 358; that stretch reads ILRIIRLVRVFRIFKLSRHS. Residues 375 to 395 form a helical membrane-spanning segment; the sequence is LGLLIFFLFIGVILFSSAVYF. Residues 421-426 carry the Selectivity filter motif; that stretch reads TVGYGD. A helical membrane pass occupies residues 436 to 456; that stretch reads IVGTLCAIAGVLTIALPVPVI. Residues 489–511 form a disordered region; that stretch reads SRMGSTESLNKTNGSCSAEKSRK.

The protein belongs to the potassium channel family. A (Shaker) (TC 1.A.1.2) subfamily. Kv1.8/KCNA10 sub-subfamily. As to quaternary structure, homotetramer. Interacts with KCN4B/POMP. Interaction with KCN4B/POMP is necessary for the modulation of channel activity by cAMP. In terms of tissue distribution, expressed strongly in the inner ear and weakly in skeletal muscle. Not detected in other tissues.

The protein resides in the membrane. The enzyme catalyses K(+)(in) = K(+)(out). Its activity is regulated as follows. The channel activity is up-regulated by cAMP. Voltage-gated potassium ion channel that mediates K(+) permeability of excitable membranes. When opened in response to the voltage difference across the membrane, KCNA10 channel selectively allows the flow of potassium ions across the membrane down their electrochemical gradient. This chain is Potassium voltage-gated channel subfamily A member 10, found in Mus musculus (Mouse).